A 371-amino-acid polypeptide reads, in one-letter code: Queuine tRNA-ribosyltransferase (371 aa).

The active-site Proton acceptor is Asp-90. Residues Asp-90 to Phe-94, Asp-144, Gln-188, and Gly-215 each bind substrate. Residues Gly-246 to Asp-252 are RNA binding. The active-site Nucleophile is the Asp-265. The RNA binding; important for wobble base 34 recognition stretch occupies residues Thr-270–Arg-274. The Zn(2+) site is built by Cys-303, Cys-305, Cys-308, and His-334.

The protein belongs to the queuine tRNA-ribosyltransferase family. In terms of assembly, homodimer. Within each dimer, one monomer is responsible for RNA recognition and catalysis, while the other monomer binds to the replacement base PreQ1. The cofactor is Zn(2+).

It carries out the reaction 7-aminomethyl-7-carbaguanine + guanosine(34) in tRNA = 7-aminomethyl-7-carbaguanosine(34) in tRNA + guanine. The protein operates within tRNA modification; tRNA-queuosine biosynthesis. Functionally, catalyzes the base-exchange of a guanine (G) residue with the queuine precursor 7-aminomethyl-7-deazaguanine (PreQ1) at position 34 (anticodon wobble position) in tRNAs with GU(N) anticodons (tRNA-Asp, -Asn, -His and -Tyr). Catalysis occurs through a double-displacement mechanism. The nucleophile active site attacks the C1' of nucleotide 34 to detach the guanine base from the RNA, forming a covalent enzyme-RNA intermediate. The proton acceptor active site deprotonates the incoming PreQ1, allowing a nucleophilic attack on the C1' of the ribose to form the product. After dissociation, two additional enzymatic reactions on the tRNA convert PreQ1 to queuine (Q), resulting in the hypermodified nucleoside queuosine (7-(((4,5-cis-dihydroxy-2-cyclopenten-1-yl)amino)methyl)-7-deazaguanosine). In Neisseria meningitidis serogroup B (strain ATCC BAA-335 / MC58), this protein is Queuine tRNA-ribosyltransferase.